The sequence spans 84 residues: Defensin-like protein 199 (84 aa).

The signal sequence occupies residues 1-24 (MAITMRTLVAFVFTIFFIISFVHS). 4 disulfides stabilise this stretch: cysteine 40/cysteine 80, cysteine 47/cysteine 72, cysteine 56/cysteine 78, and cysteine 60/cysteine 79.

It belongs to the DEFL family.

Its subcellular location is the secreted. This Arabidopsis thaliana (Mouse-ear cress) protein is Defensin-like protein 199.